Here is a 278-residue protein sequence, read N- to C-terminus: UPF0276 protein Shew_2240 (278 aa).

It belongs to the UPF0276 family.

In Shewanella loihica (strain ATCC BAA-1088 / PV-4), this protein is UPF0276 protein Shew_2240.